The sequence spans 106 residues: ATP-dependent Clp protease adapter protein ClpS (106 aa).

The tract at residues 1 to 22 is disordered; sequence MNEYHNSLKSKESVKDERQQKL. The span at 9 to 20 shows a compositional bias: basic and acidic residues; it reads KSKESVKDERQQ.

The protein belongs to the ClpS family. Binds to the N-terminal domain of the chaperone ClpA.

Its function is as follows. Involved in the modulation of the specificity of the ClpAP-mediated ATP-dependent protein degradation. The polypeptide is ATP-dependent Clp protease adapter protein ClpS (Photorhabdus laumondii subsp. laumondii (strain DSM 15139 / CIP 105565 / TT01) (Photorhabdus luminescens subsp. laumondii)).